Reading from the N-terminus, the 215-residue chain is Large ribosomal subunit protein uL3 (215 aa).

Residues Gly-136–Lys-155 form a disordered region. Gln-151 bears the N5-methylglutamine mark.

Belongs to the universal ribosomal protein uL3 family. Part of the 50S ribosomal subunit. Forms a cluster with proteins L14 and L19. Methylated by PrmB.

Functionally, one of the primary rRNA binding proteins, it binds directly near the 3'-end of the 23S rRNA, where it nucleates assembly of the 50S subunit. The protein is Large ribosomal subunit protein uL3 of Rickettsia canadensis (strain McKiel).